Here is a 496-residue protein sequence, read N- to C-terminus: Lysine--tRNA ligase (496 aa).

Glu-409 and Glu-416 together coordinate Mg(2+).

This sequence belongs to the class-II aminoacyl-tRNA synthetase family. Homodimer. The cofactor is Mg(2+).

It is found in the cytoplasm. It catalyses the reaction tRNA(Lys) + L-lysine + ATP = L-lysyl-tRNA(Lys) + AMP + diphosphate. The protein is Lysine--tRNA ligase of Streptococcus agalactiae serotype III (strain NEM316).